The primary structure comprises 793 residues: MASKTKASEALKVVARCRPLSRKEEAAGHEQILTMDVKLGQVTLRNPRAAPGELPKTFTFDAVYDASSKQADLYDETVRPLIDSVLQGFNGTVFAYGQTGTGKTYTMQGTWVEPELRGVIPNAFEHIFTHISRSQNQQYLVRASYLEIYQEEIRDLLSKEPGKRLELKENPETGVYIKDLSSFVTKNVKEIEHVMNLGNQTRAVGSTHMNEVSSRSHAIFIITVECSERGSDGQDHIRVGKLNLVDLAGSERQNKAGPNTAGGASTPSSGGSGGGGGSGGGAGGERPKEASKINLSLSALGNVIAALAGNRSTHIPYRDSKLTRLLQDSLGGNAKTIMVATLGPASHSYDESLSTLRFANRAKNIKNKPRVNEDPKDTLLREFQEEIARLKAQLEKRGMLGKRPRRKSSRGKKAVSAPPGYPESPVIEAWVAEEEDDNNNNHRPPQPILESALEKNMENYLQEQKERLEEEKAAIQDDRSLVSEEKQKLLEEKEKMLEKDLRREQQATELLAAKYKAMESKLLIGGRNIMDHTNEQQKMLELKRQEIAEQKRREREMQQEMMLRDEETMELRGTYTSLQQEVEVKTKKLKKLYAKLQAVKAEIQDQHDEYIRVRQDLEEAQNEQTRELKLKYLIIENFIPPEEKNKIMNRLFLDCEEEQWKFQPLVPAGVNSQMKKRPTSAVGYKRPISQYARVAMAMGSHPRYRAENIMFLELDVSPPAVFEMEFSHDQEQDPRALHMERLMRLDSFLERLSTSKVRKSRSWCQSPQRPPPSTTHASLASASLRPATVADHE.

The Kinesin motor domain maps to 10-365 (ALKVVARCRP…LRFANRAKNI (356 aa)). 97–104 (GQTGTGKT) serves as a coordination point for ATP. 3 disordered regions span residues 251–288 (ERQN…ERPK), 395–423 (EKRG…GYPE), and 756–793 (KVRK…ADHE). Gly residues predominate over residues 270–284 (GGSGGGGGSGGGAGG). Residues 376–630 (KDTLLREFQE…QNEQTRELKL (255 aa)) are a coiled coil. The span at 399 to 413 (MLGKRPRRKSSRGKK) shows a compositional bias: basic residues. The globular stretch occupies residues 631–793 (KYLIIENFIP…LRPATVADHE (163 aa)).

It belongs to the TRAFAC class myosin-kinesin ATPase superfamily. Kinesin family. Kinesin II subfamily. As to quaternary structure, heterodimer of KIF3A and KIF3C.

The protein resides in the cytoplasm. Its subcellular location is the cytoskeleton. Microtubule-based anterograde translocator for membranous organelles. The chain is Kinesin-like protein KIF3C (KIF3C) from Pongo abelii (Sumatran orangutan).